The following is a 327-amino-acid chain: Methionyl-tRNA formyltransferase (327 aa).

A (6S)-5,6,7,8-tetrahydrofolate-binding site is contributed by 121-124 (SLLP).

It belongs to the Fmt family.

The catalysed reaction is L-methionyl-tRNA(fMet) + (6R)-10-formyltetrahydrofolate = N-formyl-L-methionyl-tRNA(fMet) + (6S)-5,6,7,8-tetrahydrofolate + H(+). Attaches a formyl group to the free amino group of methionyl-tRNA(fMet). The formyl group appears to play a dual role in the initiator identity of N-formylmethionyl-tRNA by promoting its recognition by IF2 and preventing the misappropriation of this tRNA by the elongation apparatus. The sequence is that of Methionyl-tRNA formyltransferase from Burkholderia pseudomallei (strain 1106a).